Consider the following 153-residue polypeptide: Lectin-like protein EP153R (153 aa).

Over 1–30 (MYFKKKYIGLIDKNCEKKILDDSSTIKICY) the chain is Cytoplasmic. A helical membrane pass occupies residues 31–51 (ILIGILIGTNMITLIYNFIFW). Over 52–153 (DNYIKCYRNN…YTDLLFICGK (102 aa)) the chain is Extracellular. Cys-67 and Cys-78 are joined by a disulfide. Residues Asn-83, Asn-89, Asn-101, Asn-107, Asn-113, Asn-120, Asn-127, and Asn-143 are each glycosylated (N-linked (GlcNAc...) asparagine; by host). Cys-97 and Cys-151 form a disulfide bridge.

This sequence belongs to the asfivirus lectin-like protein family. As to quaternary structure, homodimer.

It localises to the host endoplasmic reticulum membrane. Down-regulates MHC-I expression by impairing the appropriate configuration or presentation into the plasma membrane of the latter. Participates in viral hemadsorption, which may help viral spread. Reduces the transactivating activity of host TP53, thus inhibiting apoptosis. Non-essential for virus growth in swine macrophage cell cultures. This chain is Lectin-like protein EP153R, found in African swine fever virus (strain Badajoz 1971 Vero-adapted) (Ba71V).